The sequence spans 157 residues: UPF0262 protein amb3341 (157 aa).

This sequence belongs to the UPF0262 family.

The polypeptide is UPF0262 protein amb3341 (Paramagnetospirillum magneticum (strain ATCC 700264 / AMB-1) (Magnetospirillum magneticum)).